A 360-amino-acid chain; its full sequence is Chorismate synthase (360 aa).

Arg46 contacts NADP(+). Residues 122–124 (RAS), Gly282, 297–301 (KPTPS), and Arg324 each bind FMN.

Belongs to the chorismate synthase family. Requires FMNH2 as cofactor.

It carries out the reaction 5-O-(1-carboxyvinyl)-3-phosphoshikimate = chorismate + phosphate. The protein operates within metabolic intermediate biosynthesis; chorismate biosynthesis; chorismate from D-erythrose 4-phosphate and phosphoenolpyruvate: step 7/7. In terms of biological role, catalyzes the anti-1,4-elimination of the C-3 phosphate and the C-6 proR hydrogen from 5-enolpyruvylshikimate-3-phosphate (EPSP) to yield chorismate, which is the branch point compound that serves as the starting substrate for the three terminal pathways of aromatic amino acid biosynthesis. This reaction introduces a second double bond into the aromatic ring system. The sequence is that of Chorismate synthase from Archaeoglobus fulgidus (strain ATCC 49558 / DSM 4304 / JCM 9628 / NBRC 100126 / VC-16).